Consider the following 290-residue polypeptide: 3-keto-disaccharide hydrolase (290 aa).

The N-terminal stretch at 1 to 19 is a signal peptide; that stretch reads MKKVFYPLACCLAAGVLVS. Cysteine 20 carries N-palmitoyl cysteine lipidation. A lipid anchor (S-diacylglycerol cysteine) is attached at cysteine 20.

Its subcellular location is the cell membrane. The enzyme catalyses 3-dehydro-alpha,alpha-trehalose + H2O = 3-dehydro-D-glucose + D-glucose. Its function is as follows. 3-keto-disaccharide hydrolase that preferentially hydrolyzes 3-keto-trehalose (3-dehydro-alpha,alpha-trehalose). Important for disaccharide utilization in the human gut. Also shows hydrolysis activity with the glucosinolates glucoraphanin or glucobrassicin, but with much lower efficiency. This chain is 3-keto-disaccharide hydrolase, found in Bacteroides thetaiotaomicron (strain ATCC 29148 / DSM 2079 / JCM 5827 / CCUG 10774 / NCTC 10582 / VPI-5482 / E50).